The chain runs to 157 residues: Myosin essential light chain, striated adductor muscle (157 aa).

EF-hand domains lie at 7–44 (DEID…LGIN) and 82–117 (GTFA…LGER).

Functionally, in molluscan muscle, calcium regulation is associated with myosin rather than with actin. Muscle myosin contains two types of light chains: the catalytic light chain, essential for ATPase activity, and the regulatory light chain, a calcium-binding protein responsible for Ca(2+) dependent binding and Ca(2+) dependent Mg-ATPase activity. The protein is Myosin essential light chain, striated adductor muscle of Argopecten irradians (Bay scallop).